The primary structure comprises 266 residues: Trehalose-6-phosphate phosphatase (266 aa).

D20 functions as the Nucleophile in the catalytic mechanism. Positions 20, 22, and 198 each coordinate Mg(2+). Position 20 to 22 (20 to 22) interacts with substrate; the sequence is DLD.

Belongs to the trehalose phosphatase family. It depends on Mg(2+) as a cofactor. Requires Mn(2+) as cofactor. Co(2+) serves as cofactor. The cofactor is Zn(2+).

The enzyme catalyses alpha,alpha-trehalose 6-phosphate + H2O = alpha,alpha-trehalose + phosphate. It participates in glycan biosynthesis; trehalose biosynthesis. In terms of biological role, removes the phosphate from trehalose 6-phosphate (Tre6P) to produce free trehalose. Also catalyzes the dephosphorylation of glucose-6-phosphate (Glu6P) and 2-deoxyglucose-6-phosphate (2dGlu6P). This chain is Trehalose-6-phosphate phosphatase (otsB), found in Escherichia coli (strain K12).